The primary structure comprises 313 residues: Formimidoylglutamase (313 aa).

Mn(2+) contacts are provided by His130, Asp155, His157, Asp159, Asp241, and Asp243.

This sequence belongs to the arginase family. Mn(2+) serves as cofactor.

It catalyses the reaction N-formimidoyl-L-glutamate + H2O = formamide + L-glutamate. Its pathway is amino-acid degradation; L-histidine degradation into L-glutamate; L-glutamate from N-formimidoyl-L-glutamate (hydrolase route): step 1/1. Its function is as follows. Catalyzes the conversion of N-formimidoyl-L-glutamate to L-glutamate and formamide. This chain is Formimidoylglutamase, found in Salmonella schwarzengrund (strain CVM19633).